We begin with the raw amino-acid sequence, 451 residues long: Ammonium transporter Rh type B (451 aa).

Over 1–11 (MADVSTSMRLK) the chain is Cytoplasmic. A helical transmembrane segment spans residues 12 to 32 (LPVVCFILEIILIILFGALVQ). The Extracellular portion of the chain corresponds to 33–63 (YDYETDAKEWHNQSHNDYENDFYFRYPSFQD). Asparagine 44 is a glycosylation site (N-linked (GlcNAc...) asparagine). A helical membrane pass occupies residues 64–84 (VHVMIFIGFGFLMTFLQKYGF). Topologically, residues 85-87 (GSV) are cytoplasmic. A helical transmembrane segment spans residues 88–108 (GFNFLIAAFSLQWATLMQGFF). Residues 109 to 121 (HGMHGGKIHVGVE) lie on the Extracellular side of the membrane. A helical membrane pass occupies residues 122–142 (SMINADFCTGSVLISFGAVLG). Topologically, residues 143–151 (KTSPIQLLT) are cytoplasmic. Residues 152–172 (MAMFEVTLFAVNEFILLSLLG) form a helical membrane-spanning segment. Residues 173–176 (TRDA) lie on the Extracellular side of the membrane. Residues 177–197 (GGSMTIHTFGAYFGLMVTRIL) form a helical membrane-spanning segment. Topologically, residues 198–216 (YRPHLDKSKHRNSSVYHSD) are cytoplasmic. Residues 217–237 (LFAMIGTIYLWMFWPSFNSAI) traverse the membrane as a helical segment. At 238-247 (TAHGDDQHRT) the chain is on the extracellular side. Residues 248–270 (ALNTYYSLAACTLATYGMSAVTS) form a helical membrane-spanning segment. At 271–274 (HDGK) the chain is on the cytoplasmic side. The chain crosses the membrane as a helical span at residues 275–295 (LDMVHIQNAALAGGVAVGTAG). Topologically, residues 296–298 (EMM) are extracellular. The chain crosses the membrane as a helical span at residues 299–319 (LTPFGSMIVGFLAGIISVLGF). Topologically, residues 320 to 340 (KFLSPILESKLKIQDTCGVHN) are cytoplasmic. Residues 341–361 (LHGMPGVLGAIVGAVTAALAT) traverse the membrane as a helical segment. Residues 362-390 (MDVYGKGMEDVFPAVADGSIDASKQGGVQ) are Extracellular-facing. A helical membrane pass occupies residues 391–411 (ALSLAITLGIALLGGLIVVFG). Residues 412–451 (TPPDTLCFEDGVYWEVPESEAPHEAQLTTVRTEETEKLSS) lie on the Cytoplasmic side of the membrane.

This sequence belongs to the ammonium transporter (TC 2.A.49) family. Rh subfamily.

The protein resides in the basolateral cell membrane. Its subcellular location is the cytoplasmic vesicle membrane. Its function is as follows. Functions as an ammonia transporter. May play a role in the elimination of ammonia in the gill. This Tetraodon nigroviridis (Spotted green pufferfish) protein is Ammonium transporter Rh type B (rhbg).